The chain runs to 488 residues: Germacrene A hydroxylase (488 aa).

Topologically, residues 1–6 are cytoplasmic; the sequence is MELSFT. The chain crosses the membrane as a helical; Signal-anchor for type II membrane protein span at residues 7 to 23; sequence TSIAVATIVFVLFKLAT. Residues 24 to 488 are Lumenal-facing; that stretch reads RPKSNKKLLP…KTHLVLVPSF (465 aa). N-linked (GlcNAc...) asparagine glycosylation is found at N255, N260, and N379. Residue C432 coordinates heme.

The protein belongs to the cytochrome P450 family. Heme serves as cofactor.

Its subcellular location is the endoplasmic reticulum membrane. It catalyses the reaction (+)-(R)-germacrene A + 3 reduced [NADPH--hemoprotein reductase] + 3 O2 = germacra-1(10),4,11(13)-trien-12-oate + 3 oxidized [NADPH--hemoprotein reductase] + 4 H2O + 4 H(+). It functions in the pathway secondary metabolite biosynthesis; terpenoid biosynthesis. Its function is as follows. Involved in the biosynthesis of germacrene-derived sesquiterpene lactones. Catalyzes three consecutive oxidations of germacrene A to produce germacrene A acid. Could also catalyze the three-step oxidation of non-natural substrate amorphadiene to artemisinic acid. The polypeptide is Germacrene A hydroxylase (Saussurea costus (Costus)).